A 162-amino-acid chain; its full sequence is MKSKILCNLFKGKSCICLYTNCLNENNVNKCYYNLVRNYSDHVKDHFNKPRNVGSFDKNEKNIGTSIVGKASCGDVIKLQLKIENDVIKDARFMAFGCGSAIASSSYATELIKGKTIDEALKIKNNDIASHLSLPPVKIHCSLLAEDAIKHAIKNYREKVLT.

The protein belongs to the NifU family. As to quaternary structure, homotrimer. Small proportion is monomeric. Interacts with IscS. Interacts with ABCB6. Component of a complex, at least composed of IscS, Isd11 and IscU. [4Fe-4S] cluster serves as cofactor.

The protein localises to the mitochondrion. The protein operates within cofactor biosynthesis; iron-sulfur cluster biosynthesis. In terms of biological role, participates in iron-sulfur cluster formation (ISC) pathway for iron-sulfur (Fe-S) cluster biogenesis. Plays a role of a major scaffold protein for [Fe-S] assembly; assembles [4Fe-4S] clusters directly upon interaction with the catalytic component IscS-Isd11 as part of the scaffold complex. Can transfer [4Fe-4S] clusters to target apo-proteins. This chain is Iron-sulfur cluster assembly protein IscU, found in Plasmodium falciparum (isolate 3D7).